A 184-amino-acid chain; its full sequence is Endothelial cell-specific molecule 1 (184 aa).

The N-terminal stretch at Met-1 to Ser-21 is a signal peptide. Residues Tyr-24–Cys-102 form the IGFBP N-terminal domain. 6 disulfide bridges follow: Cys-28-Cys-51, Cys-32-Cys-53, Cys-37-Cys-54, Cys-43-Cys-57, Cys-65-Cys-83, and Cys-77-Cys-99. The tract at residues Arg-145–Arg-184 is disordered. Basic and acidic residues predominate over residues His-150–Ile-167. O-linked (Xyl...) (chondroitin sulfate) serine glycosylation is present at Ser-157.

In terms of processing, O-glycosylated; contains chondroitin sulfate and dermatan sulfate.

The protein localises to the secreted. In terms of biological role, involved in angiogenesis; promotes angiogenic sprouting. May have potent implications in lung endothelial cell-leukocyte interactions. In Mus musculus (Mouse), this protein is Endothelial cell-specific molecule 1 (Esm1).